Consider the following 374-residue polypeptide: Heme A synthase (374 aa).

The next 8 helical transmembrane spans lie at 22–42 (VAVW…IGAI), 107–127 (LWGR…WVRG), 135–155 (PTLA…WFMV), 172–192 (LHLG…LGLL), 209–229 (AWAA…VAGI), 265–285 (AAVQ…VLSL), 306–326 (AAAT…VVWI), and 327–347 (PLAT…VWTL). Residue His-271 coordinates heme. His-332 is a binding site for heme.

This sequence belongs to the COX15/CtaA family. Type 2 subfamily. Interacts with CtaB. Requires heme b as cofactor.

The protein localises to the cell membrane. It carries out the reaction Fe(II)-heme o + 2 A + H2O = Fe(II)-heme a + 2 AH2. The protein operates within porphyrin-containing compound metabolism; heme A biosynthesis; heme A from heme O: step 1/1. Its function is as follows. Catalyzes the conversion of heme O to heme A by two successive hydroxylations of the methyl group at C8. The first hydroxylation forms heme I, the second hydroxylation results in an unstable dihydroxymethyl group, which spontaneously dehydrates, resulting in the formyl group of heme A. The sequence is that of Heme A synthase from Rhodospirillum centenum (strain ATCC 51521 / SW).